Here is a 127-residue protein sequence, read N- to C-terminus: Small ribosomal subunit protein bS6 (127 aa).

Basic and acidic residues predominate over residues 106 to 117; it reads ERKAQSEKKEAE. A disordered region spans residues 106–127; sequence ERKAQSEKKEAEVSEGEGGTEA. A compositionally biased stretch (acidic residues) spans 118-127; that stretch reads VSEGEGGTEA.

The protein belongs to the bacterial ribosomal protein bS6 family.

Its function is as follows. Binds together with bS18 to 16S ribosomal RNA. The sequence is that of Small ribosomal subunit protein bS6 from Thermotoga neapolitana (strain ATCC 49049 / DSM 4359 / NBRC 107923 / NS-E).